A 282-amino-acid chain; its full sequence is Ribosomal RNA small subunit methyltransferase A (282 aa).

The S-adenosyl-L-methionine site is built by histidine 11, leucine 13, glycine 44, glutamate 65, aspartate 90, and asparagine 106.

It belongs to the class I-like SAM-binding methyltransferase superfamily. rRNA adenine N(6)-methyltransferase family. RsmA subfamily.

The protein localises to the cytoplasm. The catalysed reaction is adenosine(1518)/adenosine(1519) in 16S rRNA + 4 S-adenosyl-L-methionine = N(6)-dimethyladenosine(1518)/N(6)-dimethyladenosine(1519) in 16S rRNA + 4 S-adenosyl-L-homocysteine + 4 H(+). In terms of biological role, specifically dimethylates two adjacent adenosines (A1518 and A1519) in the loop of a conserved hairpin near the 3'-end of 16S rRNA in the 30S particle. May play a critical role in biogenesis of 30S subunits. This chain is Ribosomal RNA small subunit methyltransferase A, found in Synechococcus sp. (strain JA-2-3B'a(2-13)) (Cyanobacteria bacterium Yellowstone B-Prime).